The sequence spans 169 residues: 3-hydroxyanthranilate 3,4-dioxygenase (169 aa).

Arg-44 lines the O2 pocket. Fe cation-binding residues include His-48, Glu-54, and His-92. Residue Glu-54 participates in substrate binding. The substrate site is built by Arg-96 and Glu-106. A divalent metal cation-binding residues include Cys-121, Cys-124, Cys-158, and Cys-160.

The protein belongs to the 3-HAO family. The cofactor is Fe(2+).

It localises to the cytoplasm. It carries out the reaction 3-hydroxyanthranilate + O2 = (2Z,4Z)-2-amino-3-carboxymuconate 6-semialdehyde. It functions in the pathway cofactor biosynthesis; NAD(+) biosynthesis; quinolinate from L-kynurenine: step 3/3. Catalyzes the oxidative ring opening of 3-hydroxyanthranilate to 2-amino-3-carboxymuconate semialdehyde, which spontaneously cyclizes to quinolinate. This chain is 3-hydroxyanthranilate 3,4-dioxygenase, found in Meyerozyma guilliermondii (strain ATCC 6260 / CBS 566 / DSM 6381 / JCM 1539 / NBRC 10279 / NRRL Y-324) (Yeast).